A 260-amino-acid chain; its full sequence is uncharacterized protein (260 aa).

This is an uncharacterized protein from Caenorhabditis elegans.